The chain runs to 435 residues: MSTGFFGDIQKVRYEGPESDNPLAFRHYNADEIVLGKRMEDHLRFAVAYWHSFAWEGGDPFGGRTFDRPWFSNEIDAAKLKADVAFEFFSLLGAPYYCFHDADVRPEGRNFAENTRYLNEIVDIFEKKQAETGMKLLWGTANLFSNRRYMAGAATNPDPDVFAFAAATVKTCIDATKRLGGENYVLWGGREGYETLLNTDLSRELDHMGRFLSLVVEYKHKIGFKGTILIEPKPQEPTKHQYDYDVATVYGFLKRYGLENEVKVNIEQGHAILAGHSFEHELALARTLGIFGSIDMNRNDYQSGWDTDQFPNNVPEMALAYYQVLLAGGFTTGGTNFDAKLRRQSLDPQDLLIGHIGGMDCCARGLKAAARMLEDGALSKPLDERYAGWNGEFGKRLLSGLSLDQIAGEVEAKDINPQPKSGRQEYLENIVNRYV.

Mg(2+) is bound by residues Asp-306 and Asp-308.

Belongs to the xylose isomerase family. As to quaternary structure, homotetramer. It depends on Mg(2+) as a cofactor.

The protein resides in the cytoplasm. The enzyme catalyses alpha-D-xylose = alpha-D-xylulofuranose. The chain is Xylose isomerase from Brucella melitensis biotype 2 (strain ATCC 23457).